Reading from the N-terminus, the 299-residue chain is ATP phosphoribosyltransferase (299 aa).

It belongs to the ATP phosphoribosyltransferase family. Long subfamily. It depends on Mg(2+) as a cofactor.

It is found in the cytoplasm. It catalyses the reaction 1-(5-phospho-beta-D-ribosyl)-ATP + diphosphate = 5-phospho-alpha-D-ribose 1-diphosphate + ATP. The protein operates within amino-acid biosynthesis; L-histidine biosynthesis; L-histidine from 5-phospho-alpha-D-ribose 1-diphosphate: step 1/9. Its activity is regulated as follows. Feedback inhibited by histidine. Functionally, catalyzes the condensation of ATP and 5-phosphoribose 1-diphosphate to form N'-(5'-phosphoribosyl)-ATP (PR-ATP). Has a crucial role in the pathway because the rate of histidine biosynthesis seems to be controlled primarily by regulation of HisG enzymatic activity. This is ATP phosphoribosyltransferase from Rhodopirellula baltica (strain DSM 10527 / NCIMB 13988 / SH1).